The following is a 681-amino-acid chain: Fibulin-1 (681 aa).

The signal sequence occupies residues 1-17; that stretch reads MDLYMIVLLSLCGLLRA. 33 disulfide bridges follow: C29/C55, C30/C62, C43/C63, C72/C103, C85/C104, C106/C125, C107/C138, C114/C139, C162/C171, C167/C176, C178/C191, C197/C210, C204/C219, C225/C237, C243/C256, C250/C265, C271/C283, C289/C301, C317/C330, C336/C348, C343/C357, C359/C372, C378/C390, C386/C399, C401/C414, C420/C429, C440/C454, C460/C473, C469/C482, C484/C498, C504/C517, C511/C526, and C531/C553. Anaphylatoxin-like domains lie at 29 to 63, 68 to 107, and 108 to 139; these read CCED…EQCC, EDSI…CECC, and LLGS…RSCC. The 35-residue stretch at 158–192 folds into the EGF-like 1 domain; it reads TEDQCRAAGCAQRCLNGTCSCLDGFKLKTDGKHCE. N-linked (GlcNAc...) asparagine glycosylation occurs at N173. Positions 193–238 constitute an EGF-like 2; calcium-binding domain; the sequence is DINECLLGPHHCVTGERCINTLGSYRCQREISCGTGYELTDNNKCK. The EGF-like 3; calcium-binding domain occupies 239–284; it reads DIDECDLGTHNCAAEMECQNTAGSFRCRPRMQCAAGFIQDALGSCI. Positions 285–331 constitute an EGF-like 4; calcium-binding domain; sequence DINECVSVTALSRGQMCFNTVGSFICQRHSVTCGRGYHLNAEGTRCV. Residues 332 to 373 form the EGF-like 5; calcium-binding domain; that stretch reads DIDECAGPDNSCDGHGCINLVGSYRCECRTGFIFNSISRSCE. Positions 374-415 constitute an EGF-like 6; calcium-binding domain; it reads DIDECRNYPGRLCAHKCENILGSYKCSCTAGFKLADDGRNCD. Residues 416–455 form the EGF-like 7; calcium-binding domain; the sequence is DVNECESSPCSQGCANVYGSYQSYCRRGYQLSDADGITCE. The EGF-like 8; calcium-binding domain occupies 456–499; it reads DIDECALPTGGHICSYRCHNTPGSFHCTCPASGYTLAANGRSCQ. An EGF-like 9; calcium-binding domain is found at 500-554; that stretch reads DIDECLTGTHSCSESESCFNIQGGFRCLSFDCPANYRRSGDTRPRVDRADIIRCV.

This sequence belongs to the fibulin family. Homomultimerizes and interacts with various extracellular matrix components such as FN1, LAMA1, NID, AGC1 and CSPG2.

It is found in the secreted. Its subcellular location is the extracellular space. The protein localises to the extracellular matrix. In terms of biological role, incorporated into fibronectin-containing matrix fibers. May play a role in cell adhesion and migration along protein fibers within the extracellular matrix (ECM). Could be important for certain developmental processes and contribute to the supramolecular organization of ECM architecture, in particular to those of basement membranes. In Danio rerio (Zebrafish), this protein is Fibulin-1 (fbln1).